Here is a 161-residue protein sequence, read N- to C-terminus: Endoribonuclease YbeY (161 aa).

Zn(2+) is bound by residues H121, H125, and H131.

This sequence belongs to the endoribonuclease YbeY family. It depends on Zn(2+) as a cofactor.

It is found in the cytoplasm. Single strand-specific metallo-endoribonuclease involved in late-stage 70S ribosome quality control and in maturation of the 3' terminus of the 16S rRNA. The protein is Endoribonuclease YbeY of Xylella fastidiosa (strain 9a5c).